Reading from the N-terminus, the 366-residue chain is NADH-quinone oxidoreductase subunit D (366 aa).

It belongs to the complex I 49 kDa subunit family. NDH-1 is composed of 14 different subunits. Subunits NuoB, C, D, E, F, and G constitute the peripheral sector of the complex.

The protein resides in the cell membrane. It carries out the reaction a quinone + NADH + 5 H(+)(in) = a quinol + NAD(+) + 4 H(+)(out). In terms of biological role, NDH-1 shuttles electrons from NADH, via FMN and iron-sulfur (Fe-S) centers, to quinones in the respiratory chain. The immediate electron acceptor for the enzyme in this species is believed to be a menaquinone. Couples the redox reaction to proton translocation (for every two electrons transferred, four hydrogen ions are translocated across the cytoplasmic membrane), and thus conserves the redox energy in a proton gradient. In Bacillus cereus (strain ATCC 10987 / NRS 248), this protein is NADH-quinone oxidoreductase subunit D.